We begin with the raw amino-acid sequence, 68 residues long: Conotoxin Lt5.11 (68 aa).

Residues Met-1 to Pro-19 form the signal peptide. Residues Lys-20 to Ala-54 constitute a propeptide that is removed on maturation.

The protein belongs to the conotoxin T superfamily. Contains 2 disulfide bonds that can be either 'C1-C3, C2-C4' or 'C1-C4, C2-C3', since these disulfide connectivities have been observed for conotoxins with cysteine framework V (for examples, see AC P0DQQ7 and AC P81755). In terms of tissue distribution, expressed by the venom duct.

The protein localises to the secreted. The polypeptide is Conotoxin Lt5.11 (Conus litteratus (Lettered cone)).